Reading from the N-terminus, the 221-residue chain is Probable glutathione S-transferase parC (221 aa).

One can recognise a GST N-terminal domain in the interval 4–83 (EEVILLDFWP…YIEEVWKDKA (80 aa)). Glutathione is bound by residues Ser-14, Lys-41, Ile-55, and 67-68 (ES). Residues 90 to 214 (DPYDRAQARF…PKVLEFVKVL (125 aa)) enclose the GST C-terminal domain.

Belongs to the GST superfamily. Phi family. Abundant in seedlings and roots. It is also found in the shoot tips, flowers and leaves.

The enzyme catalyses RX + glutathione = an S-substituted glutathione + a halide anion + H(+). Conjugation of reduced glutathione to a wide number of exogenous and endogenous hydrophobic electrophiles. The protein is Probable glutathione S-transferase parC (PARC) of Nicotiana tabacum (Common tobacco).